Consider the following 252-residue polypeptide: Probable transcriptional regulatory protein TW504 (252 aa).

It belongs to the TACO1 family.

It localises to the cytoplasm. The sequence is that of Probable transcriptional regulatory protein TW504 from Tropheryma whipplei (strain TW08/27) (Whipple's bacillus).